We begin with the raw amino-acid sequence, 311 residues long: Malate dehydrogenase (311 aa).

Residues 7–13 (GAAGGIG) and Asp-34 contribute to the NAD(+) site. The substrate site is built by Arg-81 and Arg-87. Residues Asn-94 and 117 to 119 (ITN) contribute to the NAD(+) site. Positions 119 and 153 each coordinate substrate. His-177 (proton acceptor) is an active-site residue. Position 227 (Met-227) interacts with NAD(+).

Belongs to the LDH/MDH superfamily. MDH type 1 family. Homodimer.

The enzyme catalyses (S)-malate + NAD(+) = oxaloacetate + NADH + H(+). Its function is as follows. Catalyzes the reversible oxidation of malate to oxaloacetate. The protein is Malate dehydrogenase of Shewanella sp. (strain MR-4).